A 389-amino-acid polypeptide reads, in one-letter code: Arginine biosynthesis bifunctional protein ArgJ (389 aa).

6 residues coordinate substrate: Thr150, Lys173, Thr184, Glu263, Asn384, and Thr389. Residue Thr184 is the Nucleophile of the active site.

This sequence belongs to the ArgJ family. In terms of assembly, heterotetramer of two alpha and two beta chains.

It localises to the cytoplasm. It carries out the reaction N(2)-acetyl-L-ornithine + L-glutamate = N-acetyl-L-glutamate + L-ornithine. The catalysed reaction is L-glutamate + acetyl-CoA = N-acetyl-L-glutamate + CoA + H(+). It participates in amino-acid biosynthesis; L-arginine biosynthesis; L-ornithine and N-acetyl-L-glutamate from L-glutamate and N(2)-acetyl-L-ornithine (cyclic): step 1/1. Its pathway is amino-acid biosynthesis; L-arginine biosynthesis; N(2)-acetyl-L-ornithine from L-glutamate: step 1/4. Functionally, catalyzes two activities which are involved in the cyclic version of arginine biosynthesis: the synthesis of N-acetylglutamate from glutamate and acetyl-CoA as the acetyl donor, and of ornithine by transacetylation between N(2)-acetylornithine and glutamate. This chain is Arginine biosynthesis bifunctional protein ArgJ, found in Deinococcus radiodurans (strain ATCC 13939 / DSM 20539 / JCM 16871 / CCUG 27074 / LMG 4051 / NBRC 15346 / NCIMB 9279 / VKM B-1422 / R1).